We begin with the raw amino-acid sequence, 232 residues long: Biosynthetic peptidoglycan transglycosylase (232 aa).

The helical transmembrane segment at 14 to 34 threads the bilayer; that stretch reads AAVALVLLYQLWIFAHVLWWI.

It belongs to the glycosyltransferase 51 family.

The protein resides in the cell inner membrane. It catalyses the reaction [GlcNAc-(1-&gt;4)-Mur2Ac(oyl-L-Ala-gamma-D-Glu-L-Lys-D-Ala-D-Ala)](n)-di-trans,octa-cis-undecaprenyl diphosphate + beta-D-GlcNAc-(1-&gt;4)-Mur2Ac(oyl-L-Ala-gamma-D-Glu-L-Lys-D-Ala-D-Ala)-di-trans,octa-cis-undecaprenyl diphosphate = [GlcNAc-(1-&gt;4)-Mur2Ac(oyl-L-Ala-gamma-D-Glu-L-Lys-D-Ala-D-Ala)](n+1)-di-trans,octa-cis-undecaprenyl diphosphate + di-trans,octa-cis-undecaprenyl diphosphate + H(+). It participates in cell wall biogenesis; peptidoglycan biosynthesis. Peptidoglycan polymerase that catalyzes glycan chain elongation from lipid-linked precursors. The polypeptide is Biosynthetic peptidoglycan transglycosylase (Thiobacillus denitrificans (strain ATCC 25259 / T1)).